Here is a 222-residue protein sequence, read N- to C-terminus: Abasic site processing protein YedK (222 aa).

C2 (nucleophile) is an active-site residue. C2 bears the Thiazolidine linkage to a ring-opened DNA abasic site mark. The active site involves E105.

The protein belongs to the SOS response-associated peptidase family.

Its activity is regulated as follows. Formation and reversal of DNA-protein cross-link depends on DNA context. Catalyzes formation of the thiazolidine linkage in presence of abasic sites in single-stranded DNA. Mediates the reversal of the thiazolidine cross-link in presence of double stranded DNA. Sensor of abasic sites in single-stranded DNA (ssDNA) required to preserve genome integrity by promoting error-free repair of abasic sites. Recognizes and binds abasic sites in ssDNA at replication forks and chemically modifies the lesion by forming a covalent cross-link with DNA: forms a stable thiazolidine linkage between a ring-opened abasic site and the alpha-amino and sulfhydryl substituents of its N-terminal catalytic cysteine residue. The DNA-protein cross-link is then reversed: able to catalyze the reversal of the thiazolidine cross-link and cycle between a cross-link and a non-cross-linked state depending on DNA context: mediates self-reversal of the thiazolidine cross-link in double stranded DNA. May act as a protease: mediates autocatalytic processing of its N-terminal methionine in order to expose the catalytic cysteine. This chain is Abasic site processing protein YedK, found in Escherichia coli (strain K12).